The sequence spans 377 residues: Pulmonary surfactant-associated protein B (377 aa).

Positions 1–22 (MAKSHLLQWLLLLPTLCCPGAA) are cleaved as a signal peptide. Positions 23–191 (ITSASSLECA…PHTQDFSEQQ (169 aa)) are excised as a propeptide. Positions 24–64 (TSASSLECAQGPQFWCQSLEHAVQCRALGHCLQEVWGHAGA) constitute a Saposin A-type domain. Saposin B-type domains lie at 64–146 (ANDL…PRGQ), 195–272 (PLPF…STED), and 291–366 (QDTE…EAPA). 9 disulfides stabilise this stretch: Cys-68-Cys-142, Cys-71-Cys-136, Cys-99-Cys-111, Cys-199-Cys-268, Cys-202-Cys-262, Cys-226-Cys-237, Cys-295-Cys-362, Cys-298-Cys-356, and Cys-321-Cys-331. Positions 271-377 (EDAMGPALPA…PLQCFQTPHL (107 aa)) are excised as a propeptide. Asn-307 is a glycosylation site (N-linked (GlcNAc...) asparagine).

As to quaternary structure, homodimer; disulfide-linked.

The protein resides in the secreted. It is found in the extracellular space. It localises to the surface film. Functionally, pulmonary surfactant-associated proteins promote alveolar stability by lowering the surface tension at the air-liquid interface in the peripheral air spaces. SP-B increases the collapse pressure of palmitic acid to nearly 70 millinewtons per meter. This chain is Pulmonary surfactant-associated protein B (Sftpb), found in Mus musculus (Mouse).